The chain runs to 204 residues: MGGVFVVFEGGDGAGKTTQARLLDQWLTTEGIPHLMTREPGDSWLGQRIRELVLSPGSGPISSRAEALLYNADKAQHVDEVVIPALREGKVVVCDRYVDSTIAYQGAGRALDPGEVGQLACWATTGLVPDVTVLLDVDPCEGAGKIAAKDRLEAAGDEFHLRVRQHFLDLAAAHPQRYLVLNARKSRKEISEAIRQRVTGLLNR.

ATP is bound at residue 10-17 (GGDGAGKT).

It belongs to the thymidylate kinase family.

The catalysed reaction is dTMP + ATP = dTDP + ADP. Its function is as follows. Phosphorylation of dTMP to form dTDP in both de novo and salvage pathways of dTTP synthesis. The sequence is that of Thymidylate kinase from Cutibacterium acnes (strain DSM 16379 / KPA171202) (Propionibacterium acnes).